A 101-amino-acid polypeptide reads, in one-letter code: Urease subunit beta (101 aa).

Belongs to the urease beta subunit family. As to quaternary structure, heterotrimer of UreA (gamma), UreB (beta) and UreC (alpha) subunits. Three heterotrimers associate to form the active enzyme.

The protein resides in the cytoplasm. The enzyme catalyses urea + 2 H2O + H(+) = hydrogencarbonate + 2 NH4(+). Its pathway is nitrogen metabolism; urea degradation; CO(2) and NH(3) from urea (urease route): step 1/1. This Rhizobium rhizogenes (strain K84 / ATCC BAA-868) (Agrobacterium radiobacter) protein is Urease subunit beta.